Consider the following 152-residue polypeptide: Xanthine-guanine phosphoribosyltransferase (152 aa).

Residues 37–38 (RG), Arg69, and 88–96 (DDLVDTGGT) contribute to the 5-phospho-alpha-D-ribose 1-diphosphate site. Residue Arg69 coordinates GMP. Residue Asp89 participates in Mg(2+) binding. Positions 92 and 135 each coordinate guanine. 2 residues coordinate xanthine: Asp92 and Ile135. GMP-binding positions include 92–96 (DTGGT) and 134–135 (WI).

This sequence belongs to the purine/pyrimidine phosphoribosyltransferase family. XGPT subfamily. In terms of assembly, homotetramer. Mg(2+) serves as cofactor.

The protein localises to the cell inner membrane. It catalyses the reaction GMP + diphosphate = guanine + 5-phospho-alpha-D-ribose 1-diphosphate. The enzyme catalyses XMP + diphosphate = xanthine + 5-phospho-alpha-D-ribose 1-diphosphate. It carries out the reaction IMP + diphosphate = hypoxanthine + 5-phospho-alpha-D-ribose 1-diphosphate. Its pathway is purine metabolism; GMP biosynthesis via salvage pathway; GMP from guanine: step 1/1. It participates in purine metabolism; XMP biosynthesis via salvage pathway; XMP from xanthine: step 1/1. Functionally, purine salvage pathway enzyme that catalyzes the transfer of the ribosyl-5-phosphate group from 5-phospho-alpha-D-ribose 1-diphosphate (PRPP) to the N9 position of the 6-oxopurines guanine and xanthine to form the corresponding ribonucleotides GMP (guanosine 5'-monophosphate) and XMP (xanthosine 5'-monophosphate), with the release of PPi. To a lesser extent, also acts on hypoxanthine. The chain is Xanthine-guanine phosphoribosyltransferase from Serratia proteamaculans (strain 568).